The primary structure comprises 234 residues: ATP synthase subunit a 2 (234 aa).

Transmembrane regions (helical) follow at residues 20–40 (ATLI…WFVT), 78–98 (YLPF…LSVI), 107–127 (SLST…LYGV), 169–189 (VMSG…FFPV), and 194–214 (LGLL…MVFI).

This sequence belongs to the ATPase A chain family. As to quaternary structure, F-type ATPases have 2 components, CF(1) - the catalytic core - and CF(0) - the membrane proton channel. CF(1) has five subunits: alpha(3), beta(3), gamma(1), delta(1), epsilon(1). CF(0) has four main subunits: a, b, b' and c.

Its subcellular location is the cellular thylakoid membrane. Key component of the proton channel; it plays a direct role in the translocation of protons across the membrane. This chain is ATP synthase subunit a 2, found in Acaryochloris marina (strain MBIC 11017).